The following is a 418-amino-acid chain: MPMLNAQQFLNQFSLEAPLDESLYPIIRDICQEVKVHGDKALKMYNLTFDHTKTDHLEISHEQIKAAFDTLDEKTKQALQQSYERIKAYQESIKQTNQQLEESVECYEIYHPLESVGIYVPGGKASYPSTVLMTATLAQVAGVENIVVVTPPQPNGVSQEVLAACYITQVDQVFQVGGAQSIAALTYGTETIPKVDKIVGPGNQFVAYAKKYLFGQVGIDQIAGPTEIALIIDETADLDAIVYDVFAQAEHDELARTYAISEDAQVLKDLESRIAKALPNVDRYDIVSKSIANQHYLIHASNFDEACHVMNTIAPEHASIQTVNPQPYIEKVKYVGALFIGHYSPEVIGDYVAGPSHVLPTNRTARFTNGLSVNDFLTRNTVIHLSKDTFEQIADSAQHIAHVEALYNHQQSILIRQS.

NAD(+)-binding residues include Tyr119, Gln180, and Asn203. Thr226, Gln248, and His251 together coordinate substrate. 2 residues coordinate Zn(2+): Gln248 and His251. Catalysis depends on proton acceptor residues Glu316 and His317. Substrate-binding residues include His317, Asp350, Glu404, and His409. A Zn(2+)-binding site is contributed by Asp350. A Zn(2+)-binding site is contributed by His409.

This sequence belongs to the histidinol dehydrogenase family. The cofactor is Zn(2+).

It carries out the reaction L-histidinol + 2 NAD(+) + H2O = L-histidine + 2 NADH + 3 H(+). It functions in the pathway amino-acid biosynthesis; L-histidine biosynthesis; L-histidine from 5-phospho-alpha-D-ribose 1-diphosphate: step 9/9. Catalyzes the sequential NAD-dependent oxidations of L-histidinol to L-histidinaldehyde and then to L-histidine. The protein is Histidinol dehydrogenase of Staphylococcus aureus (strain COL).